Here is a 484-residue protein sequence, read N- to C-terminus: Tribbles (484 aa).

The segment covering 1 to 23 has biased composition (polar residues); that stretch reads MDNSSGQNSRTASSASTSKIVNY. The segment at 1 to 51 is disordered; sequence MDNSSGQNSRTASSASTSKIVNYSSPVSPGVAAATSSSSSSSSSGMSSSQE. The segment covering 24 to 49 has biased composition (low complexity); the sequence is SSPVSPGVAAATSSSSSSSSSGMSSS. Positions 129–397 constitute a Protein kinase domain; that stretch reads YRHLVDLTAS…ASHIFLTPWL (269 aa). Acidic residues-rich tracts occupy residues 420 to 437 and 475 to 484; these read AEED…DEEG and PEPDTDVDMG. 2 disordered regions span residues 420–443 and 464–484; these read AEED…PLGD and MAQN…VDMG.

This sequence belongs to the protein kinase superfamily. CAMK Ser/Thr protein kinase family. Tribbles subfamily. As to quaternary structure, interacts with slbo. Interacts with Akt1. As to expression, expressed throughout the brain with highest levels of expression detected in the cell body rind and lower levels of expression detected in the neurophil (at protein level).

The protein resides in the nucleus. Its subcellular location is the cytoplasm. The protein localises to the cell cortex. Its function is as follows. Adapter protein that negatively regulates different signaling pathways to coordinate cell differentiation, proliferation, migration and growth. Functions by binding to key regulatory proteins and either blocks their activity or regulates their turnover by the proteasome. In various developing tissues functions as a cell cycle regulator that mediates cell proliferation according to the requirements of the developmental program. Acts by inducing the proteasomal degradation of the CD25 mitotic activators stg and twe at critical stages of development to delay entry into mitosis and thus mediate cell proliferation. During gastrulation, negatively regulates stg to delay mitosis in the ventral region of the embryonic mesoderm thus allowing invagination to be completed before cell division takes place. Delaying stg-dependent mitosis during bristle development and in migrating germline pole cells also arrests their cell divisions, whereas in cystocytes it promotes their cell divisions. Involved in the regulation of the mid-blastula transition; promotes the destruction of twe resulting in the cell cycle arrest in G2 of cycle 14 which delays mitosis and thus reduces cell proliferation allowing cell fate specification and morphogenesis to take place. In germline cells, blocks border cell migration during oogenesis by binding to slbo/C/EBP and promoting its ubiquitination and degradation by the proteasome. May function in a negative feedback loop with slbo to coordinate proper border cell migration. During tissue growth negatively regulates insulin signaling by binding to Akt1 and blocking its phosphorylation-dependent activation. However it may also function downstream in the insulin signaling pathway, acting with Akt1 to direct foxo degradation. Essential for the proper formation of operant place and aversive olfactory memories. The protein is Tribbles of Drosophila melanogaster (Fruit fly).